The chain runs to 439 residues: GTPase Der (439 aa).

2 consecutive EngA-type G domains span residues 2–168 and 181–357; these read ATVL…EEKG and IKIA…SSYT. Residues 8-15, 55-59, 118-121, 187-194, 234-238, and 300-303 each bind GTP; these read GKPNVGKS, DTCGV, NKTE, GRPNVGKS, DTAGL, and NKWD. One can recognise a KH-like domain in the interval 358-439; the sequence is TKVPSSALNS…PIFLKFKKSR (82 aa).

The protein belongs to the TRAFAC class TrmE-Era-EngA-EngB-Septin-like GTPase superfamily. EngA (Der) GTPase family. As to quaternary structure, associates with the 50S ribosomal subunit.

Its function is as follows. GTPase that plays an essential role in the late steps of ribosome biogenesis. The polypeptide is GTPase Der (Thermotoga neapolitana (strain ATCC 49049 / DSM 4359 / NBRC 107923 / NS-E)).